The primary structure comprises 429 residues: Adenosylhomocysteinase (429 aa).

Residues T64, D136, and E161 each coordinate substrate. Residue 162–164 participates in NAD(+) binding; the sequence is TTT. Residues K191 and D195 each coordinate substrate. Residues N196, 225-230, E248, N283, 304-306, and N351 contribute to the NAD(+) site; these read GYGWCG and SGH.

It belongs to the adenosylhomocysteinase family. NAD(+) is required as a cofactor.

The protein localises to the cytoplasm. It catalyses the reaction S-adenosyl-L-homocysteine + H2O = L-homocysteine + adenosine. It functions in the pathway amino-acid biosynthesis; L-homocysteine biosynthesis; L-homocysteine from S-adenosyl-L-homocysteine: step 1/1. In terms of biological role, may play a key role in the regulation of the intracellular concentration of adenosylhomocysteine. The sequence is that of Adenosylhomocysteinase from Thermosynechococcus vestitus (strain NIES-2133 / IAM M-273 / BP-1).